The chain runs to 646 residues: Threonine--tRNA ligase (646 aa).

The TGS domain maps to 1–61 (MIKITFPDGS…NEDASVVLYK (61 aa)). Residues 242-541 (DHRKIGKEMQ…LIEHTAGKFP (300 aa)) form a catalytic region. Cys337, His388, and His518 together coordinate Zn(2+).

The protein belongs to the class-II aminoacyl-tRNA synthetase family. As to quaternary structure, homodimer. Requires Zn(2+) as cofactor.

The protein resides in the cytoplasm. It carries out the reaction tRNA(Thr) + L-threonine + ATP = L-threonyl-tRNA(Thr) + AMP + diphosphate + H(+). In terms of biological role, catalyzes the attachment of threonine to tRNA(Thr) in a two-step reaction: L-threonine is first activated by ATP to form Thr-AMP and then transferred to the acceptor end of tRNA(Thr). Also edits incorrectly charged L-seryl-tRNA(Thr). This chain is Threonine--tRNA ligase, found in Bacteroides fragilis (strain YCH46).